The sequence spans 277 residues: 3-methyl-2-oxobutanoate hydroxymethyltransferase (277 aa).

Mg(2+) is bound by residues Asp-43 and Asp-82. 3-methyl-2-oxobutanoate contacts are provided by residues 43 to 44, Asp-82, and Lys-112; that span reads DS. Glu-114 contributes to the Mg(2+) binding site. Glu-181 functions as the Proton acceptor in the catalytic mechanism.

Belongs to the PanB family. As to quaternary structure, homodecamer; pentamer of dimers. It depends on Mg(2+) as a cofactor.

The protein resides in the cytoplasm. It catalyses the reaction 3-methyl-2-oxobutanoate + (6R)-5,10-methylene-5,6,7,8-tetrahydrofolate + H2O = 2-dehydropantoate + (6S)-5,6,7,8-tetrahydrofolate. It participates in cofactor biosynthesis; (R)-pantothenate biosynthesis; (R)-pantoate from 3-methyl-2-oxobutanoate: step 1/2. Functionally, catalyzes the reversible reaction in which hydroxymethyl group from 5,10-methylenetetrahydrofolate is transferred onto alpha-ketoisovalerate to form ketopantoate. This chain is 3-methyl-2-oxobutanoate hydroxymethyltransferase, found in Bacillus velezensis (strain DSM 23117 / BGSC 10A6 / LMG 26770 / FZB42) (Bacillus amyloliquefaciens subsp. plantarum).